Consider the following 351-residue polypeptide: UDP-3-O-acylglucosamine N-acyltransferase (351 aa).

Histidine 257 serves as the catalytic Proton acceptor.

It belongs to the transferase hexapeptide repeat family. LpxD subfamily. Homotrimer.

It carries out the reaction a UDP-3-O-[(3R)-3-hydroxyacyl]-alpha-D-glucosamine + a (3R)-hydroxyacyl-[ACP] = a UDP-2-N,3-O-bis[(3R)-3-hydroxyacyl]-alpha-D-glucosamine + holo-[ACP] + H(+). It functions in the pathway bacterial outer membrane biogenesis; LPS lipid A biosynthesis. Its function is as follows. Catalyzes the N-acylation of UDP-3-O-acylglucosamine using 3-hydroxyacyl-ACP as the acyl donor. Is involved in the biosynthesis of lipid A, a phosphorylated glycolipid that anchors the lipopolysaccharide to the outer membrane of the cell. This is UDP-3-O-acylglucosamine N-acyltransferase from Methylorubrum extorquens (strain PA1) (Methylobacterium extorquens).